Reading from the N-terminus, the 577-residue chain is Aspartate--tRNA(Asp/Asn) ligase (577 aa).

Position 171 (glutamate 171) interacts with L-aspartate. The tract at residues 195–198 (QLFK) is aspartate. Residue arginine 217 participates in L-aspartate binding. Residues 217–219 (RDE) and glutamine 226 each bind ATP. Histidine 444 provides a ligand contact to L-aspartate. Glutamate 474 is an ATP binding site. Arginine 481 contacts L-aspartate. Position 526–529 (526–529 (GFDR)) interacts with ATP.

It belongs to the class-II aminoacyl-tRNA synthetase family. Type 1 subfamily. In terms of assembly, homodimer.

The protein localises to the cytoplasm. It carries out the reaction tRNA(Asx) + L-aspartate + ATP = L-aspartyl-tRNA(Asx) + AMP + diphosphate. In terms of biological role, aspartyl-tRNA synthetase with relaxed tRNA specificity since it is able to aspartylate not only its cognate tRNA(Asp) but also tRNA(Asn). Is 1.7 times more efficient at aminoacylating tRNA(Asp) over tRNA(Asn). Reaction proceeds in two steps: L-aspartate is first activated by ATP to form Asp-AMP and then transferred to the acceptor end of tRNA(Asp/Asn). This chain is Aspartate--tRNA(Asp/Asn) ligase, found in Helicobacter pylori (strain ATCC 700392 / 26695) (Campylobacter pylori).